The sequence spans 401 residues: Subtilisin-like protease 7 (401 aa).

A signal peptide spans 1 to 20; that stretch reads MGFITKAIPLALAAASVING. Positions 21 to 119 are excised as a propeptide; it reads AEILETRAGV…IERDARVQIN (99 aa). The region spanning 36-118 is the Inhibitor I9 domain; that stretch reads KYIVVMNDGM…YIERDARVQI (83 aa). An N-linked (GlcNAc...) asparagine glycan is attached at asparagine 58. Positions 129-401 constitute a Peptidase S8 domain; the sequence is SWGLARVGSR…SKLINNGSGM (273 aa). Residues aspartate 161 and histidine 193 each act as charge relay system in the active site. Asparagine 223 and asparagine 253 each carry an N-linked (GlcNAc...) asparagine glycan. Catalysis depends on serine 347, which acts as the Charge relay system. Asparagine 397 carries N-linked (GlcNAc...) asparagine glycosylation.

Belongs to the peptidase S8 family.

The protein resides in the secreted. Secreted subtilisin-like serine protease with keratinolytic activity that contributes to pathogenicity. The protein is Subtilisin-like protease 7 (SUB7) of Trichophyton tonsurans (Scalp ringworm fungus).